A 337-amino-acid chain; its full sequence is Na(+)/H(+) exchange regulatory cofactor NHE-RF2 (337 aa).

Residues 11–91 (LCRLVRGEQG…QTQLLVVDKE (81 aa)) enclose the PDZ 1 domain. The segment at 112-145 (LPPAHNPWEPKPDWACSGSLGSDTGQKDVNGPPR) is disordered. Phosphoserine occurs at positions 130, 183, 186, 254, 269, 280, and 303. Residues 151–231 (LCHLRRGPQG…EARLLVVDPE (81 aa)) form the PDZ 2 domain. The segment at 242 to 337 (VPTEEHVEGP…NRKREIFSNF (96 aa)) is disordered. The segment covering 255-275 (PVTNGTSPAQLNGGSVCSSRS) has biased composition (polar residues). Basic and acidic residues predominate over residues 327-337 (WNRKREIFSNF).

In terms of assembly, homodimer, and heterodimer with NHERF1. Binds PDZK1. Interacts with SRY. Binds ADRB2, SLC9A3, P2RY1, P2YR2, RDX and LPAR2. Interacts with MCC. Found in a complex with EZR, PODXL and NHERF2. Interacts (via the PDZ domains) with PODXL (via the C-terminal PDZ-binding motif DTHL); interaction is detected in glomerular epithelium cells. Interacts with SGK1 and KCNJ1/ROMK1. Interacts (via the PDZ domains) with SLC26A6.

The protein resides in the endomembrane system. It is found in the nucleus. Its subcellular location is the apical cell membrane. Its function is as follows. Scaffold protein that connects plasma membrane proteins with members of the ezrin/moesin/radixin family and thereby helps to link them to the actin cytoskeleton and to regulate their surface expression. Necessary for cAMP-mediated phosphorylation and inhibition of SLC9A3. May also act as scaffold protein in the nucleus. In Mus musculus (Mouse), this protein is Na(+)/H(+) exchange regulatory cofactor NHE-RF2 (Nherf2).